The sequence spans 431 residues: Glucose-1-phosphate adenylyltransferase (431 aa).

Lysine 39 serves as a coordination point for beta-D-fructose 1,6-bisphosphate. Residues arginine 40, histidine 46, and arginine 52 each contribute to the AMP site. Tyrosine 114 is an alpha-D-glucose 1-phosphate binding site. Arginine 130 is an AMP binding site. Residues glycine 179, 194–195, and serine 212 contribute to the alpha-D-glucose 1-phosphate site; that span reads EK. AMP is bound at residue arginine 386. 429-431 is a beta-D-fructose 1,6-bisphosphate binding site; the sequence is QER.

The protein belongs to the bacterial/plant glucose-1-phosphate adenylyltransferase family. In terms of assembly, homotetramer.

The catalysed reaction is alpha-D-glucose 1-phosphate + ATP + H(+) = ADP-alpha-D-glucose + diphosphate. The protein operates within glycan biosynthesis; glycogen biosynthesis. Its activity is regulated as follows. Allosterically activated by fructose-1,6-bisphosphate (F16BP) and inhibited by AMP. Involved in the biosynthesis of ADP-glucose, a building block required for the elongation reactions to produce glycogen. Catalyzes the reaction between ATP and alpha-D-glucose 1-phosphate (G1P) to produce pyrophosphate and ADP-Glc. In Klebsiella pneumoniae subsp. pneumoniae (strain ATCC 700721 / MGH 78578), this protein is Glucose-1-phosphate adenylyltransferase.